Here is a 160-residue protein sequence, read N- to C-terminus: Cytochrome b6-f complex subunit 4 (160 aa).

3 helical membrane passes run 36–56 (ILFTFPICIAGTIGLITGLAI), 95–115 (LLGIACQGAIPLGLMMVPFIE), and 131–151 (AVFLFGTAVTLWLGAGACFPI).

It belongs to the cytochrome b family. PetD subfamily. In terms of assembly, the 4 large subunits of the cytochrome b6-f complex are cytochrome b6, subunit IV (17 kDa polypeptide, PetD), cytochrome f and the Rieske protein, while the 4 small subunits are PetG, PetL, PetM and PetN. The complex functions as a dimer.

It localises to the cellular thylakoid membrane. Functionally, component of the cytochrome b6-f complex, which mediates electron transfer between photosystem II (PSII) and photosystem I (PSI), cyclic electron flow around PSI, and state transitions. The polypeptide is Cytochrome b6-f complex subunit 4 (Picosynechococcus sp. (strain ATCC 27264 / PCC 7002 / PR-6) (Agmenellum quadruplicatum)).